Here is a 185-residue protein sequence, read N- to C-terminus: Transcription termination/antitermination protein NusG (185 aa).

The KOW domain maps to 134–162; the sequence is PGQMVRVIDGPFNDFDGLVEEVNYEKNRL.

This sequence belongs to the NusG family.

Functionally, participates in transcription elongation, termination and antitermination. This Xylella fastidiosa (strain Temecula1 / ATCC 700964) protein is Transcription termination/antitermination protein NusG.